Consider the following 209-residue polypeptide: Transmembrane 4 L6 family member 19 (209 aa).

The Cytoplasmic segment spans residues 1 to 16 (MVSSPCTQASSRTCSR). Residues 17 to 37 (ILGLSLGTAALFAAGANVALL) traverse the membrane as a helical segment. The Extracellular portion of the chain corresponds to 38–59 (LPNWDVTYLLRGLLGRHAMLGT). A helical transmembrane segment spans residues 60 to 80 (GLWGGGLMVLTAAILISLMGW). Topologically, residues 81 to 93 (RYGCFSKSGLCRS) are cytoplasmic. The chain crosses the membrane as a helical span at residues 94-114 (VLTALLSGGLALLGALICFVT). Residues 115–175 (SGVALKDGPF…PSAAVVWHVS (61 aa)) lie on the Extracellular side of the membrane. A glycan (N-linked (GlcNAc...) asparagine) is linked at asparagine 133. Residues 176-196 (LFSALLCISLLQLLLVVVHVI) traverse the membrane as a helical segment. The important for homodimerization stretch occupies residues 186-196 (LQLLLVVVHVI). The Cytoplasmic portion of the chain corresponds to 197–209 (NSLLGLFCSLCEK).

The protein belongs to the L6 tetraspanin family. In terms of assembly, may form homodimers and homooligomers. Interacts with integrins ITGAV and ITGB3. Interacts with components of members of the V0 complex of vacuolar(H+)-ATPase (V-ATPase), including ATP6V0B and ATP6V0D2; this interaction inhibits V1-V0 complex assembly. As to expression, in adipose tissue, expressed by macrophages.

The protein resides in the lysosome membrane. It localises to the cytoplasm. Its subcellular location is the cytoskeleton. It is found in the cell projection. The protein localises to the filopodium. Negatively regulates vacuolar (H+)-ATPase (V-ATPase) activity by interacting with members of V-ATPase V0 complex and hence inhibiting V1-V0 complex assembly. Required for multinucleation during osteoclast differentiation. The polypeptide is Transmembrane 4 L6 family member 19 (TM4SF19) (Homo sapiens (Human)).